Reading from the N-terminus, the 259-residue chain is Protein FAM220A (259 aa).

2 disordered regions span residues 1 to 44 (MRDR…ADAP) and 131 to 154 (LGGGPRATDGHRGQCPKGEPRVSR). Basic and acidic residues predominate over residues 138–152 (TDGHRGQCPKGEPRV).

As to quaternary structure, interacts with transcriptional activator STAT3; the interaction occurs in both the nucleus and the cytoplasm, is enhanced by IL6 and promotes STAT3 dephosphorylation, leading to negative regulation of STAT3 transcriptional activator activity. Can interact with both unphosphorylated and phosphorylated STAT3 but interacts preferentially with phosphorylated STAT3 in the nucleus. Interacts with protein phosphatase PTPN2/TC45; this promotes interaction of PTPN2 with STAT3, leading to dephosphorylation of STAT3 by PTPN2.

It localises to the nucleus. The protein localises to the cytoplasm. The protein resides in the cytoplasmic vesicle. It is found in the secretory vesicle. Its subcellular location is the acrosome. In terms of biological role, promotes dephosphorylation of transcriptional activator STAT3 by interacting with both STAT3 and protein phosphatase PTPN2. This promotes interaction of PTPN2 with STAT3 and mediates STAT3 dephosphorylation by PTPN2, leading to negative regulation of STAT3 transcriptional activator activity. May be required for spermiogenesis or sperm function. This Homo sapiens (Human) protein is Protein FAM220A.